A 633-amino-acid chain; its full sequence is Glutamyl-tRNA(Gln) amidotransferase subunit E (633 aa).

The protein belongs to the GatB/GatE family. GatE subfamily. As to quaternary structure, heterodimer of GatD and GatE.

The enzyme catalyses L-glutamyl-tRNA(Gln) + L-glutamine + ATP + H2O = L-glutaminyl-tRNA(Gln) + L-glutamate + ADP + phosphate + H(+). Allows the formation of correctly charged Gln-tRNA(Gln) through the transamidation of misacylated Glu-tRNA(Gln) in organisms which lack glutaminyl-tRNA synthetase. The reaction takes place in the presence of glutamine and ATP through an activated gamma-phospho-Glu-tRNA(Gln). The GatDE system is specific for glutamate and does not act on aspartate. This is Glutamyl-tRNA(Gln) amidotransferase subunit E from Methanosarcina acetivorans (strain ATCC 35395 / DSM 2834 / JCM 12185 / C2A).